Consider the following 416-residue polypeptide: DNA-guanine transglycosylase (416 aa).

Asp95 (proton acceptor) is an active-site residue. Asp256 acts as the Nucleophile in catalysis. Zn(2+) is bound by residues Cys368, Cys370, Cys373, and His395.

It belongs to the DNA-guanine transglycosylase family. It depends on Zn(2+) as a cofactor.

Its function is as follows. Part of the dpd cluster involved in the insertion of 7-deazaguanine derivatives in DNA. DpdA may insert 7-cyano-7-deazaguanine (preQ0) into DNA with the help of DpdB. DpdA and dpdB are necessary and sufficient to synthesize 2'-deoxy-7-cyano-7-deazaguanosine (dPreQ0). The sequence is that of DNA-guanine transglycosylase from Salmonella montevideo.